A 475-amino-acid chain; its full sequence is Sulfate adenylyltransferase subunit 1 (475 aa).

The region spanning 25–239 is the tr-type G domain; it reads KSLLRFLTCG…EVLETVEIQR (215 aa). Residues 34-41 are G1; sequence GSVDDGKS. GTP is bound at residue 34-41; it reads GSVDDGKS. The tract at residues 92–96 is G2; the sequence is GITID. Residues 113 to 116 form a G3 region; the sequence is DTPG. Residues 113–117 and 168–171 contribute to the GTP site; these read DTPGH and NKMD. A G4 region spans residues 168-171; that stretch reads NKMD. Residues 206 to 208 form a G5 region; it reads SAL.

The protein belongs to the TRAFAC class translation factor GTPase superfamily. Classic translation factor GTPase family. CysN/NodQ subfamily. In terms of assembly, heterodimer composed of CysD, the smaller subunit, and CysN.

The enzyme catalyses sulfate + ATP + H(+) = adenosine 5'-phosphosulfate + diphosphate. It functions in the pathway sulfur metabolism; hydrogen sulfide biosynthesis; sulfite from sulfate: step 1/3. Functionally, with CysD forms the ATP sulfurylase (ATPS) that catalyzes the adenylation of sulfate producing adenosine 5'-phosphosulfate (APS) and diphosphate, the first enzymatic step in sulfur assimilation pathway. APS synthesis involves the formation of a high-energy phosphoric-sulfuric acid anhydride bond driven by GTP hydrolysis by CysN coupled to ATP hydrolysis by CysD. In Escherichia coli (strain 55989 / EAEC), this protein is Sulfate adenylyltransferase subunit 1.